Consider the following 219-residue polypeptide: 23.6 kDa heat shock protein, mitochondrial (219 aa).

A mitochondrion-targeting transit peptide spans 1-29 (MALARQCLSKRLAAGCALARPLHAASPVA). The sHSP domain occupies 104 to 219 (QVAETLTRPL…KRSVTEVKVR (116 aa)).

Belongs to the small heat shock protein (HSP20) family. In terms of assembly, may form oligomeric structures.

The protein localises to the mitochondrion. This is 23.6 kDa heat shock protein, mitochondrial (HSP23.6) from Oryza sativa subsp. japonica (Rice).